Here is a 362-residue protein sequence, read N- to C-terminus: Protein mab-21-like 3 (362 aa).

It belongs to the mab-21 family.

This is Protein mab-21-like 3 (MAB21L3) from Homo sapiens (Human).